We begin with the raw amino-acid sequence, 317 residues long: MTDKLTSLRQITTVVADTGDIAAMKLYQPQDATTNPSLILNAAQIPEYRKLIDEAIAWAREQSSDHAQQIVDATDKLAVNIGLEILKLIPGRISTEVDARLSYDTVASVAKAKRLIKLYNEAGISNDRILIKLASTWQGIRAAEQLEKEGINCNLTLLFSFAQARACAEAGVFLISPFVGRILDWYKANGDKKEFAPHEDPGVVSVTEIYQYYKKHGYKTVVMGASFRNLGEIIELAGCDRLTIAPSLLKELAESEGPVERKLAYTGEVQAKPTPLTEAEFYWQHNQDPMAIDKLADGIRKFAIDQGKLEKMISDLL.

The Schiff-base intermediate with substrate role is filled by K132.

It belongs to the transaldolase family. Type 1 subfamily. Homodimer.

The protein localises to the cytoplasm. The enzyme catalyses D-sedoheptulose 7-phosphate + D-glyceraldehyde 3-phosphate = D-erythrose 4-phosphate + beta-D-fructose 6-phosphate. It participates in carbohydrate degradation; pentose phosphate pathway; D-glyceraldehyde 3-phosphate and beta-D-fructose 6-phosphate from D-ribose 5-phosphate and D-xylulose 5-phosphate (non-oxidative stage): step 2/3. Transaldolase is important for the balance of metabolites in the pentose-phosphate pathway. The chain is Transaldolase from Yersinia enterocolitica serotype O:8 / biotype 1B (strain NCTC 13174 / 8081).